The primary structure comprises 445 residues: Arginine/agmatine antiporter (445 aa).

Over 1 to 9 (MSSDADAHK) the chain is Cytoplasmic. The chain crosses the membrane as a helical span at residues 10 to 30 (VGLIPVTLMVSGNIMGSGVFL). I23 contributes to the agmatine binding site. The L-arginine site is built by I23 and S26. The Periplasmic segment spans residues 31–38 (LPANLAAT). A helical transmembrane segment spans residues 39 to 59 (GGIAIYGWLVTIIGALALSMV). Over 60–98 (YAKMSSLDPSPGGSYAYARRCFGPFLGYQTNVLYWLACW) the chain is Cytoplasmic. Agmatine contacts are provided by A96, C97, and N101. Position 96 (A96) interacts with L-arginine. A helical membrane pass occupies residues 99–119 (IGNIAMVVIGVGYLSYFFPIL). Residues 120–122 (KDP) are Periplasmic-facing. Residues 123–143 (LVLTLTCVAVLWIFVLLNIVG) traverse the membrane as a helical segment. Over 144 to 152 (PKMITRVQA) the chain is Cytoplasmic. Residues 153–173 (VATVLALVPIVGIAVFGWFWF) form a helical membrane-spanning segment. Topologically, residues 174 to 196 (KGETYMAAWNVSGMNTFGAIQST) are periplasmic. A helical membrane pass occupies residues 197-217 (LNVTLWSFIGVESASVAAGVV). Positions 202 and 205 each coordinate L-arginine. I205 serves as a coordination point for agmatine. Residues 218–225 (KNPKRNVP) are Cytoplasmic-facing. A helical transmembrane segment spans residues 226-246 (IATIGGVLIAAVCYVLSTTAI). The Periplasmic portion of the chain corresponds to 247–275 (MGMIPNAALRVSASPFGDAARMALGDTAG). The helical transmembrane segment at 276-296 (AIVSFCAAAGCLGSLGGWTLL) threads the bilayer. W293 is an agmatine binding site. At 297–319 (AGQTAKAAADDGLFPPIFARVNK) the chain is on the cytoplasmic side. A helical membrane pass occupies residues 320 to 340 (AGTPVAGLLIVGVLMTIFQFS). Residues 341 to 355 (SMSPNAAKEFGLVSS) lie on the Periplasmic side of the membrane. The chain crosses the membrane as a helical span at residues 356–376 (VSVIFTLVPYLYTCAALLLLG). S357 is an L-arginine binding site. Topologically, residues 377–385 (HGHFGKARP) are cytoplasmic. Residues 386–406 (LYLLITFVAFVYCIWAVIGSG) traverse the membrane as a helical segment. The Periplasmic portion of the chain corresponds to 407–408 (AK). Residues 409 to 429 (EVMWSFVTLMVITALYALNYN) traverse the membrane as a helical segment. The Cytoplasmic segment spans residues 430–445 (RIHKNPYPLDAPVKQD).

This sequence belongs to the amino acid-polyamine-organocation (APC) superfamily. Basic amino acid/polyamine antiporter (APA) (TC 2.A.3.2) family. Homodimer; each subunit has its own individual transport capacity.

The protein resides in the cell inner membrane. It catalyses the reaction agmatine(in) + L-arginine(out) = agmatine(out) + L-arginine(in). Major component of the acid-resistance (AR) system allowing enteric pathogens to survive the acidic environment in the stomach. Exchanges extracellular arginine for its intracellular decarboxylation product agmatine (Agm) thereby expelling intracellular protons. Probably undergoes several conformational states in order to translocate the substrate across the membrane; keeps the substrate accessible to only 1 side of the membrane at a time by opening and closing 3 membrane-internal gates. The chain is Arginine/agmatine antiporter (adiC) from Salmonella typhi.